The chain runs to 289 residues: Kinetochore-associated protein MTW1 (289 aa).

The stretch at arginine 105–arginine 147 forms a coiled coil.

It belongs to the mis12 family. As to quaternary structure, component of the MIND kinetochore complex, which is composed of at least MTW1, NNF1, NSL1 and DSN1.

It localises to the chromosome. The protein resides in the centromere. It is found in the kinetochore. Its subcellular location is the cytoplasm. The protein localises to the cytoskeleton. It localises to the spindle pole. In terms of biological role, acts as an essential component of the kinetochore MIND complex, which is required for the spindle checkpoint and kinetochore integrity. MIND plays a role in establishing a bipolar spindle-kinetochore interaction by joining kinetochore subunits contacting DNA to those contacting microtubules. The polypeptide is Kinetochore-associated protein MTW1 (MTW1) (Saccharomyces cerevisiae (strain ATCC 204508 / S288c) (Baker's yeast)).